The following is a 506-amino-acid chain: Procardosin-B (506 aa).

The N-terminal stretch at 1–24 (MGTPIKASLLALFLFFLLSPTAFS) is a signal peptide. Residues 25 to 70 (VSNGGLLRVGLKKRKVDRLDQLRAHGVHMLGNARKDFGFRRTLSDS) constitute a propeptide that is removed on maturation. One can recognise a Peptidase A1 domain in the interval 85-503 (YYGEIGIGTP…DYGKLRVGFA (419 aa)). D103 is a catalytic residue. C116 and C122 are oxidised to a cystine. Residues N139 and N252 are each glycosylated (N-linked (GlcNAc...) asparagine). C281 and C285 form a disulfide bridge. D290 is an active-site residue. In terms of domain architecture, Saposin B-type spans 315 to 417 (VLNQQCKTLV…NEVCDQLPTS (103 aa)). Disulfide bonds link C320-C411, C345-C383, C351-C380, and C425-C462. The N-linked (GlcNAc...) asparagine glycan is linked to N397.

Belongs to the peptidase A1 family. As to quaternary structure, heterodimer of a light chain and a heavy chain. An intermediate form is produced first, and undergoes proteolytic processing to remove the internal plant-specific insert (PSI) and the propeptide. In terms of tissue distribution, detected in pistils, but not in seeds, bracts, midribs, roots, leaves or stamen extracts. Detected in seeds. In stigmas and styles, detected in the transmitting tissue and in contiguous subepidermal layers at the longitudenal grooves of the stigma (at protein level).

It localises to the microsome membrane. The protein localises to the protein storage vacuole. It is found in the secreted. The protein resides in the cell wall. Its subcellular location is the extracellular space. It localises to the extracellular matrix. Its activity is regulated as follows. Inhibited by the specific aspartic proteinase inhibitors diazoacetyl-noleucine methyl ester and pepstatin. Aspartic protease. Cleaves alpha-lactalbumin but not beta-lactoglobulin. The polypeptide is Procardosin-B (Cynara cardunculus (Cardoon)).